The following is a 565-amino-acid chain: Hemagglutinin-neuraminidase (565 aa).

At 1 to 20 (MVAEDAPVRGTCRVLFRTTT) the chain is on the intravirion side. Residues 21–41 (LIFLCTLLALSISILYESLII) form a helical membrane-spanning segment. The Virion surface segment spans residues 42–565 (RKQIMSQAGS…VPFIRQVTLS (524 aa)). Residues N110 and N139 are each glycosylated (N-linked (GlcNAc...) asparagine; by host). Disulfide bonds link C161-C185, C175-C236, and C227-C240. Residues 223-228 (NRKSCS) are involved in neuraminidase activity. The N-linked (GlcNAc...) asparagine; by host glycan is linked to N267. Cystine bridges form between C333–C454, C365–C375, and C448–C458. N504 is a glycosylation site (N-linked (GlcNAc...) asparagine; by host). A disulfide bond links C528 and C539.

It belongs to the paramyxoviruses hemagglutinin-neuraminidase family. As to quaternary structure, homotetramer; composed of disulfide-linked homodimers. Interacts with F protein trimer.

The protein localises to the virion membrane. The protein resides in the host cell membrane. The catalysed reaction is Hydrolysis of alpha-(2-&gt;3)-, alpha-(2-&gt;6)-, alpha-(2-&gt;8)- glycosidic linkages of terminal sialic acid residues in oligosaccharides, glycoproteins, glycolipids, colominic acid and synthetic substrates.. Its function is as follows. Attaches the virus to sialic acid-containing cell receptors and thereby initiating infection. Binding of HN protein to the receptor induces a conformational change that allows the F protein to trigger virion/cell membranes fusion. Functionally, neuraminidase activity ensures the efficient spread of the virus by dissociating the mature virions from the neuraminic acid containing glycoproteins. This chain is Hemagglutinin-neuraminidase (HN), found in Canis lupus familiaris (Dog).